The sequence spans 315 residues: Protein ORANGE-LIKE, chloroplastic (315 aa).

The N-terminal 16 residues, 1-16 (MTCFSSATPHRHHLLL), are a transit peptide targeting the chloroplast. 2 helical membrane passes run 155 to 175 (LYSTSVALISGIIFFGGLIAP) and 207 to 227 (IVASFSGGAVGVISTLMLIEV). The CR-type zinc finger occupies 225-307 (IEVNNVKQQE…CTGMVTASEH (83 aa)). The CXXCXGXG motif repeat unit spans residues 238–245 (CKYCLGTG). The CXXCXXXG motif repeat unit spans residues 249-256 (CARCSASG). The stretch at 282–289 (CLNCSGAG) is one CXXCXGXG motif repeat. The CXXCXXXG motif repeat unit spans residues 293–300 (CPTCLCTG).

It belongs to the orange-like family. In terms of assembly, interacts with PSY1.

It is found in the plastid. The protein localises to the chloroplast membrane. May be associated with accumulation of carotenoids in chromoplasts. The polypeptide is Protein ORANGE-LIKE, chloroplastic (ORLIKE) (Arabidopsis thaliana (Mouse-ear cress)).